The primary structure comprises 880 residues: GAS2-like protein 2 (880 aa).

The Calponin-homology (CH) domain occupies 32–159 (EAMKEDLAEW…CLLELGRRAW (128 aa)). Residues 180 to 200 (RRELALPPPDPSPPAPPRRQP) are disordered. Pro residues predominate over residues 185 to 198 (LPPPDPSPPAPPRR). The GAR domain maps to 201–273 (CHFRNLDQMV…HYLDKHDPCR (73 aa)). Disordered stretches follow at residues 283–360 (SFLK…MAPF), 372–437 (WRQP…NPTP), 489–533 (ESVR…ELGR), and 676–880 (APTG…ESWV). Residues 301 to 315 (GPSQTQPTMTISRSQ) show a composition bias toward polar residues. The segment at 438–880 (QRLRAIEATT…PLPPEEESWV (443 aa)) is interaction with ADORA2A. The segment covering 506-515 (RLPPARPPTP) has biased composition (pro residues). Residues 725–734 (QDCSASTVSA) are compositionally biased toward polar residues. Basic residues-rich tracts occupy residues 757–767 (KGRRTLRKPKR) and 774–785 (LKLRPRIRPRRD).

Belongs to the GAS2 family. Interacts with ADORA2A (via its cytoplasmic C-terminal domain). Interacts with GNAS, GNAL, GNAQ, and GNA13. Interacts with MAPRE1. In terms of tissue distribution, expressed in bronchial and nasal epithelial cells (at protein level). Expressed in brain, kidney, lung, testis, fallopian tubes, and skeletal muscle. Expressed at low levels in stomach and colon.

It localises to the cytoplasm. The protein localises to the cytoskeleton. It is found in the cell membrane. The protein resides in the stress fiber. Its subcellular location is the cilium basal body. Involved in the cross-linking of microtubules and microfilaments. Regulates microtubule dynamics and stability by interacting with microtubule plus-end tracking proteins, such as MAPRE1, to regulate microtubule growth along actin stress fibers. Enhances ADORA2-mediated adenylyl cyclase activation by acting as a scaffold to recruit trimeric G-protein complexes to ADORA2A. Regulates ciliary orientation and performance in cells located in the airway. In Homo sapiens (Human), this protein is GAS2-like protein 2 (GAS2L2).